The sequence spans 303 residues: MSHFGRSGPPDISDTYSLLVLNITFRTTADDLYPLFAKYGKVVDVFIPRDRRTGDSRGFAFVRYKYKDEAHKAVERLDGRVVDGREITVQFAKYGPNAEKISKGRVVEPPPKSRRSRSRSPRRSRSPRRSRSPPRRRSPRRSRSPRRRSRDDYREKDYRKRSRSRSYDRRERHEEKDRDHRRRTRSRSASPDEKRRVRGRYDNESRSHSRSLSASPARRSPRSSSPQKTSPAREVSPDKRSNERSPSPRRSLSPRSPALQKASPSKEMSPERRSNERSPSPGSPAPLRKVDAASRSQSPYAAE.

At S7 the chain carries Phosphoserine. Positions 16-94 (YSLLVLNITF…REITVQFAKY (79 aa)) constitute an RRM domain. The tract at residues 100–303 (KISKGRVVEP…SRSQSPYAAE (204 aa)) is disordered. Residues 112-148 (KSRRSRSRSPRRSRSPRRSRSPPRRRSPRRSRSPRRR) are compositionally biased toward basic residues. 2 stretches are compositionally biased toward basic and acidic residues: residues 149 to 158 (SRDDYREKDY) and 165 to 178 (RSYDRRERHEEKDR). S186 and S188 each carry phosphoserine. Basic and acidic residues predominate over residues 190–207 (SPDEKRRVRGRYDNESRS). 2 stretches are compositionally biased toward low complexity: residues 210 to 226 (RSLSASPARRSPRSSSP) and 244 to 257 (RSPSPRRSLSPRSP). Phosphoserine is present on residues S251, S253, S256, S263, S278, S280, S283, S296, and S298. Residues 294 to 303 (SRSQSPYAAE) show a composition bias toward polar residues.

This sequence belongs to the splicing factor SR family. SC subfamily. Component of the spliceosome. Interacts with SNRNP35, CYP59 and RS2Z33.

It localises to the nucleus speckle. Functionally, probably involved in intron recognition and spliceosome assembly, but not involved in alternative splicing regulation of the SCL33 intron. This Arabidopsis thaliana (Mouse-ear cress) protein is Serine/arginine-rich splicing factor SC35 (SC35).